A 542-amino-acid chain; its full sequence is Chitinase 2 (542 aa).

An N-terminal signal peptide occupies residues 1–22 (MLTRTFLGMAISAFLASTGVQA). A GH18 domain is found at 29–314 (PNVMYYWGQN…SQLYSLVHSG (286 aa)). The active-site Proton donor is the E166. Positions 312-356 (HSGGSTPPPPSSSSATKTTTKTTATSTKTTTTTAPTATSTPGSCP) are disordered. A compositionally biased stretch (low complexity) spans 323-354 (SSSATKTTTKTTATSTKTTTTTAPTATSTPGS). Residues 355–406 (CPVANQPCSTQNQYACTADGKYAVCDHGKWVASSCPSNTVCIPTTDGASIYC) form a chitin-binding, high affinity region. Residues 447-542 (AQLAVTSTDK…APSTSAWNFK (96 aa)) constitute a propeptide that is removed on maturation.

It belongs to the glycosyl hydrolase 18 family. Chitinase class III subfamily. As to quaternary structure, monomer. Post-translationally, O-glycosylated.

Its subcellular location is the secreted. The catalysed reaction is Random endo-hydrolysis of N-acetyl-beta-D-glucosaminide (1-&gt;4)-beta-linkages in chitin and chitodextrins.. Its function is as follows. Probably involved in the apical growth and branching of fungal hyphae. This chain is Chitinase 2 (CHI2), found in Rhizopus oligosporus (Rhizopus microsporus var. oligosporus).